A 412-amino-acid chain; its full sequence is Serine hydroxymethyltransferase (412 aa).

(6S)-5,6,7,8-tetrahydrofolate contacts are provided by residues L117 and 121-123 (GHL). Position 226 is an N6-(pyridoxal phosphate)lysine (K226).

This sequence belongs to the SHMT family. In terms of assembly, homodimer. Pyridoxal 5'-phosphate serves as cofactor.

It is found in the cytoplasm. The catalysed reaction is (6R)-5,10-methylene-5,6,7,8-tetrahydrofolate + glycine + H2O = (6S)-5,6,7,8-tetrahydrofolate + L-serine. It participates in one-carbon metabolism; tetrahydrofolate interconversion. The protein operates within amino-acid biosynthesis; glycine biosynthesis; glycine from L-serine: step 1/1. In terms of biological role, catalyzes the reversible interconversion of serine and glycine with tetrahydrofolate (THF) serving as the one-carbon carrier. This reaction serves as the major source of one-carbon groups required for the biosynthesis of purines, thymidylate, methionine, and other important biomolecules. Also exhibits THF-independent aldolase activity toward beta-hydroxyamino acids, producing glycine and aldehydes, via a retro-aldol mechanism. In Staphylococcus haemolyticus (strain JCSC1435), this protein is Serine hydroxymethyltransferase.